Reading from the N-terminus, the 346-residue chain is D-erythrose-4-phosphate dehydrogenase (346 aa).

11–12 (RI) is a binding site for NAD(+). Substrate contacts are provided by residues 163–165 (SCT), Arg209, 222–223 (TK), and Arg245. Cys164 serves as the catalytic Nucleophile. Asn327 is a binding site for NAD(+).

The protein belongs to the glyceraldehyde-3-phosphate dehydrogenase family. Epd subfamily. As to quaternary structure, homotetramer.

Its subcellular location is the cytoplasm. The enzyme catalyses D-erythrose 4-phosphate + NAD(+) + H2O = 4-phospho-D-erythronate + NADH + 2 H(+). It participates in cofactor biosynthesis; pyridoxine 5'-phosphate biosynthesis; pyridoxine 5'-phosphate from D-erythrose 4-phosphate: step 1/5. Its function is as follows. Catalyzes the NAD-dependent conversion of D-erythrose 4-phosphate to 4-phosphoerythronate. This Vibrio vulnificus (strain YJ016) protein is D-erythrose-4-phosphate dehydrogenase.